A 179-amino-acid chain; its full sequence is Large ribosomal subunit protein uL5 (179 aa).

This sequence belongs to the universal ribosomal protein uL5 family. In terms of assembly, part of the 50S ribosomal subunit; part of the 5S rRNA/L5/L18/L25 subcomplex. Contacts the 5S rRNA and the P site tRNA. Forms a bridge to the 30S subunit in the 70S ribosome.

Its function is as follows. This is one of the proteins that bind and probably mediate the attachment of the 5S RNA into the large ribosomal subunit, where it forms part of the central protuberance. In the 70S ribosome it contacts protein S13 of the 30S subunit (bridge B1b), connecting the 2 subunits; this bridge is implicated in subunit movement. Contacts the P site tRNA; the 5S rRNA and some of its associated proteins might help stabilize positioning of ribosome-bound tRNAs. The protein is Large ribosomal subunit protein uL5 of Geotalea daltonii (strain DSM 22248 / JCM 15807 / FRC-32) (Geobacter daltonii).